The primary structure comprises 64 residues: Large ribosomal subunit protein bL35 (64 aa).

It belongs to the bacterial ribosomal protein bL35 family.

This chain is Large ribosomal subunit protein bL35, found in Shewanella sediminis (strain HAW-EB3).